The chain runs to 147 residues: Peptide methionine sulfoxide reductase MsrB (147 aa).

Positions 1–11 (MPKIVKKEPKF) are enriched in basic and acidic residues. The segment at 1–25 (MPKIVKKEPKFVEQSGKKVTKSDEQ) is disordered. The region spanning 23-145 (DEQWREQLSD…NSVSLIFNKS (123 aa)) is the MsrB domain. Zn(2+) contacts are provided by Cys62, Cys65, Cys111, and Cys114. The Nucleophile role is filled by Cys134.

This sequence belongs to the MsrB Met sulfoxide reductase family. Zn(2+) is required as a cofactor.

It catalyses the reaction L-methionyl-[protein] + [thioredoxin]-disulfide + H2O = L-methionyl-(R)-S-oxide-[protein] + [thioredoxin]-dithiol. The sequence is that of Peptide methionine sulfoxide reductase MsrB from Vibrio parahaemolyticus serotype O3:K6 (strain RIMD 2210633).